Consider the following 992-residue polypeptide: ATP-dependent DNA helicase PIF7 (992 aa).

Residues 1-21 constitute a mitochondrion transit peptide; it reads MWDGPLRSRQNLRTVAKLRSS. 3 disordered regions span residues 20 to 43, 145 to 182, and 190 to 209; these read SSGC…GETA, TVNK…TAAS, and LDSS…AVTQ. Polar residues-rich tracts occupy residues 23–43, 173–182, and 191–208; these read CPLT…GETA, NVDNTTTAAS, and DSSS…QAVT. Position 237-244 (237-244) interacts with ATP; it reads GGAGTGKS. A DNA-binding region spans residues 651–670; sequence QAYVALSRCTDVANLVIENF.

This sequence belongs to the helicase family. PIF1 subfamily. Monomer. The cofactor is Mg(2+).

It is found in the mitochondrion matrix. Its subcellular location is the kinetoplast. The catalysed reaction is Couples ATP hydrolysis with the unwinding of duplex DNA at the replication fork by translocating in the 5'-3' direction. This creates two antiparallel DNA single strands (ssDNA). The leading ssDNA polymer is the template for DNA polymerase III holoenzyme which synthesizes a continuous strand.. It carries out the reaction ATP + H2O = ADP + phosphate + H(+). Functionally, DNA-dependent ATPase and 5'-3' DNA helicase required for the maintenance of mitochondrial (kinetoplast) genome stability. This Trypanosoma brucei brucei (strain 927/4 GUTat10.1) protein is ATP-dependent DNA helicase PIF7.